Here is a 319-residue protein sequence, read N- to C-terminus: Ribonuclease Z (319 aa).

Zn(2+) contacts are provided by His62, His64, Asp66, His67, His139, Asp210, and His268. Asp66 acts as the Proton acceptor in catalysis.

Belongs to the RNase Z family. In terms of assembly, homodimer. The cofactor is Zn(2+).

It catalyses the reaction Endonucleolytic cleavage of RNA, removing extra 3' nucleotides from tRNA precursor, generating 3' termini of tRNAs. A 3'-hydroxy group is left at the tRNA terminus and a 5'-phosphoryl group is left at the trailer molecule.. Zinc phosphodiesterase, which displays some tRNA 3'-processing endonuclease activity. Probably involved in tRNA maturation, by removing a 3'-trailer from precursor tRNA. The sequence is that of Ribonuclease Z from Nostoc punctiforme (strain ATCC 29133 / PCC 73102).